Here is a 289-residue protein sequence, read N- to C-terminus: Rhodopsin (289 aa).

Topologically, residues Y1–A7 are extracellular. Residues Y8 to V32 form a helical membrane-spanning segment. Residues T33 to N44 lie on the Cytoplasmic side of the membrane. A helical membrane pass occupies residues Y45 to Y67. The Extracellular portion of the chain corresponds to T68–C81. C81 and C158 are joined by a disulfide. Residues N82 to I104 form a helical membrane-spanning segment. Positions E105–W107 match the 'Ionic lock' involved in activated form stabilization motif. At E105–H123 the chain is on the cytoplasmic side. A helical membrane pass occupies residues A124 to V144. The Extracellular segment spans residues G145–S173. Residue N171 is glycosylated (N-linked (GlcNAc...) asparagine). Residues F174–G195 traverse the membrane as a helical segment. At R196–R223 the chain is on the cytoplasmic side. The chain crosses the membrane as a helical span at residues M224–Y245. Over I246 to I257 the chain is Extracellular. A helical transmembrane segment spans residues F258–C279. An N6-(retinylidene)lysine modification is found at K267. Residues M280–I289 are Cytoplasmic-facing.

The protein belongs to the G-protein coupled receptor 1 family. Opsin subfamily. In terms of processing, phosphorylated on some or all of the serine and threonine residues present in the C-terminal region. Post-translationally, contains one covalently linked retinal chromophore.

The protein localises to the membrane. The protein resides in the cell projection. It localises to the cilium. It is found in the photoreceptor outer segment. Its function is as follows. Photoreceptor required for image-forming vision at low light intensity. While most salt water fish species use retinal as chromophore, most freshwater fish use 3-dehydroretinal, or a mixture of retinal and 3-dehydroretinal. Light-induced isomerization of 11-cis to all-trans retinal triggers a conformational change that activates signaling via G-proteins. Subsequent receptor phosphorylation mediates displacement of the bound G-protein alpha subunit by arrestin and terminates signaling. The chain is Rhodopsin (rho) from Cottocomephorus grewingkii (Baikal yellowfin).